The sequence spans 129 residues: Large ribosomal subunit protein eL32 (129 aa).

The protein belongs to the eukaryotic ribosomal protein eL32 family.

This chain is Large ribosomal subunit protein eL32 (rpl32e), found in Methanosarcina acetivorans (strain ATCC 35395 / DSM 2834 / JCM 12185 / C2A).